A 117-amino-acid chain; its full sequence is uncharacterized protein (117 aa).

Residues 5–50 (DKIHNTNEQITALEKKKYQIETTLLEKQRDLLKLETQQNKAKLELL) adopt a coiled-coil conformation.

This is an uncharacterized protein from Bacillus pumilus (Bacillus mesentericus).